Reading from the N-terminus, the 361-residue chain is UDP-N-acetylglucosamine--N-acetylmuramyl-(pentapeptide) pyrophosphoryl-undecaprenol N-acetylglucosamine transferase (361 aa).

Positions 199 and 290 each coordinate UDP-N-acetyl-alpha-D-glucosamine.

This sequence belongs to the glycosyltransferase 28 family. MurG subfamily.

The protein localises to the cell membrane. It catalyses the reaction Mur2Ac(oyl-L-Ala-gamma-D-Glu-L-Lys-D-Ala-D-Ala)-di-trans,octa-cis-undecaprenyl diphosphate + UDP-N-acetyl-alpha-D-glucosamine = beta-D-GlcNAc-(1-&gt;4)-Mur2Ac(oyl-L-Ala-gamma-D-Glu-L-Lys-D-Ala-D-Ala)-di-trans,octa-cis-undecaprenyl diphosphate + UDP + H(+). Its pathway is cell wall biogenesis; peptidoglycan biosynthesis. In terms of biological role, cell wall formation. Catalyzes the transfer of a GlcNAc subunit on undecaprenyl-pyrophosphoryl-MurNAc-pentapeptide (lipid intermediate I) to form undecaprenyl-pyrophosphoryl-MurNAc-(pentapeptide)GlcNAc (lipid intermediate II). The polypeptide is UDP-N-acetylglucosamine--N-acetylmuramyl-(pentapeptide) pyrophosphoryl-undecaprenol N-acetylglucosamine transferase (Streptococcus mutans serotype c (strain ATCC 700610 / UA159)).